Consider the following 181-residue polypeptide: MGGFFSSIFSSLFGTREMRILILGLDGAGKTTILYRLQVGEVVTTIPTIGFNVETVTYKNLKFQVWDLGGQTSIRPYWRCYYSNTDAVIYVVDSCDRDRIGISKSELVAMLEEEELRKAILVVFANKQDMEQAMTPSEMANSLGLPALKDRKWQIFKTSATKGTGLDEAMEWLVETLKSRQ.

Gly-2 is lipidated: N-myristoyl glycine. Residues 24–31 (GLDGAGKT), 45–48 (TIPT), Gly-70, 126–129 (NKQD), and 160–161 (AT) contribute to the GTP site. Residues Thr-31 and Thr-48 each contribute to the Mg(2+) site.

It belongs to the small GTPase superfamily. Arf family. In terms of assembly, the GTP-bound form interacts with GOLGA1. The GTP-bound form interacts with GOLGA4 and RGPD8. The GTP-bound form directly interacts with ARFIP2. Binds to SCOC, preferentially in its GTP-bound form. May interact with UNC119. Interacts with ARFIP1; this interaction directs ARFIP1 to the trans-Golgi membranes. Interacts with ARFGEF1 (via N-terminus).

It localises to the golgi apparatus membrane. It is found in the golgi apparatus. Its subcellular location is the trans-Golgi network membrane. The protein resides in the membrane. In terms of biological role, GTP-binding protein that recruits several effectors, such as golgins, arfaptins and Arf-GEFs to the trans-Golgi network, and modulates their functions at the Golgi complex. Plays thereby a role in a wide range of fundamental cellular processes, including cell polarity, innate immunity, or protein secretion mediated by arfaptins, which were shown to play a role in maintaining insulin secretion from pancreatic beta cells. The chain is ADP-ribosylation factor-like protein 1 (ARL1) from Bos taurus (Bovine).